Here is a 409-residue protein sequence, read N- to C-terminus: Sprouty-related, EVH1 domain-containing protein 2 (409 aa).

The region spanning alanine 5–leucine 121 is the WH1 domain. The disordered stretch occupies residues leucine 121–proline 170. Positions glutamate 123 to histidine 133 are enriched in polar residues. Over residues threonine 146–serine 155 the composition is skewed to low complexity. Residues proline 199–serine 253 enclose the KBD domain. Residues arginine 299–alanine 407 enclose the SPR domain.

It is found in the cell membrane. The protein resides in the cytoplasmic vesicle. It localises to the secretory vesicle membrane. Its subcellular location is the cytoplasm. Negatively regulates Ras signaling pathways and downstream activation of MAP kinases. The protein is Sprouty-related, EVH1 domain-containing protein 2 (spred2) of Xenopus tropicalis (Western clawed frog).